Consider the following 344-residue polypeptide: DNA-directed RNA polymerase subunit alpha (344 aa).

Residues 1-238 (MKVIKTAPLI…KQLGVFGERP (238 aa)) form an alpha N-terminal domain (alpha-NTD) region. The alpha C-terminal domain (alpha-CTD) stretch occupies residues 253–344 (DAKDLSAKIE…EKLEDKGGND (92 aa)).

It belongs to the RNA polymerase alpha chain family. As to quaternary structure, homodimer. The RNAP catalytic core consists of 2 alpha, 1 beta, 1 beta' and 1 omega subunit. When a sigma factor is associated with the core the holoenzyme is formed, which can initiate transcription.

The enzyme catalyses RNA(n) + a ribonucleoside 5'-triphosphate = RNA(n+1) + diphosphate. In terms of biological role, DNA-dependent RNA polymerase catalyzes the transcription of DNA into RNA using the four ribonucleoside triphosphates as substrates. The polypeptide is DNA-directed RNA polymerase subunit alpha (Helicobacter pylori (strain HPAG1)).